We begin with the raw amino-acid sequence, 67 residues long: Large ribosomal subunit protein bL35 (67 aa).

The protein belongs to the bacterial ribosomal protein bL35 family.

The polypeptide is Large ribosomal subunit protein bL35 (Synechocystis sp. (strain ATCC 27184 / PCC 6803 / Kazusa)).